We begin with the raw amino-acid sequence, 213 residues long: Protein big brother (213 aa).

The protein belongs to the CBF-beta family.

The protein localises to the nucleus. Its function is as follows. Regulates the DNA-binding properties of Runt. This is Protein big brother (Bgb) from Drosophila melanogaster (Fruit fly).